The primary structure comprises 394 residues: Phosphopentomutase (394 aa).

Residues Asp-13, Asp-286, His-291, Asp-327, His-328, and His-339 each contribute to the Mn(2+) site.

Belongs to the phosphopentomutase family. It depends on Mn(2+) as a cofactor.

The protein resides in the cytoplasm. It catalyses the reaction 2-deoxy-alpha-D-ribose 1-phosphate = 2-deoxy-D-ribose 5-phosphate. The catalysed reaction is alpha-D-ribose 1-phosphate = D-ribose 5-phosphate. Its pathway is carbohydrate degradation; 2-deoxy-D-ribose 1-phosphate degradation; D-glyceraldehyde 3-phosphate and acetaldehyde from 2-deoxy-alpha-D-ribose 1-phosphate: step 1/2. Isomerase that catalyzes the conversion of deoxy-ribose 1-phosphate (dRib-1-P) and ribose 1-phosphate (Rib-1-P) to deoxy-ribose 5-phosphate (dRib-5-P) and ribose 5-phosphate (Rib-5-P), respectively. This chain is Phosphopentomutase, found in Bacillus thuringiensis (strain Al Hakam).